We begin with the raw amino-acid sequence, 483 residues long: Probable pectate lyase 12 (483 aa).

A signal peptide spans 1–24; the sequence is MMLQRSCIVLFFSLFLLVPQMVFS. Asparagine 27 and asparagine 50 each carry an N-linked (GlcNAc...) asparagine glycan. The Ca(2+) site is built by aspartate 220, aspartate 244, and aspartate 248. Arginine 300 is an active-site residue.

This sequence belongs to the polysaccharide lyase 1 family. Ca(2+) serves as cofactor.

It carries out the reaction Eliminative cleavage of (1-&gt;4)-alpha-D-galacturonan to give oligosaccharides with 4-deoxy-alpha-D-galact-4-enuronosyl groups at their non-reducing ends.. It participates in glycan metabolism; pectin degradation; 2-dehydro-3-deoxy-D-gluconate from pectin: step 2/5. In Arabidopsis thaliana (Mouse-ear cress), this protein is Probable pectate lyase 12.